Consider the following 534-residue polypeptide: NEDD8-activating enzyme E1 regulatory subunit (534 aa).

Ala2 is subject to N-acetylalanine. Residues Lys6 and Lys341 each carry the N6-acetyllysine modification. Positions 331–344 (DMIADSNKYIKLQN) are interaction with UBA3.

It belongs to the ubiquitin-activating E1 family. ULA1 subfamily. As to quaternary structure, heterodimer of UBA3 and NAE1. The complex binds NEDD8 and UBE2M. Binds APP and TP53BP2. In terms of processing, ubiquitinated by TRIP12, leading to its degradation by the proteasome. As to expression, expressed throughout the brain. In hippocampus, strongly expressed in granule cells and in the pyramidal cell layer. Strongly expressed in the piriform cortex. In the cerebellum, expressed only in Purkinje cells.

The protein resides in the cell membrane. Its pathway is protein modification; protein neddylation. Binding of TP53BP2 to the regulatory subunit NAE1 decreases neddylation activity. Functionally, regulatory subunit of the dimeric UBA3-NAE1 E1 enzyme. E1 activates NEDD8 by first adenylating its C-terminal glycine residue with ATP, thereafter linking this residue to the side chain of the catalytic cysteine, yielding a NEDD8-UBA3 thioester and free AMP. E1 finally transfers NEDD8 to the catalytic cysteine of UBE2M. Necessary for cell cycle progression through the S-M checkpoint. Overexpression of NAE1 causes apoptosis through deregulation of NEDD8 conjugation. The covalent attachment of NEDD8 to target proteins is known as 'neddylation' and the process is involved in the regulation of cell growth, viability and development. The chain is NEDD8-activating enzyme E1 regulatory subunit (Nae1) from Rattus norvegicus (Rat).